A 360-amino-acid chain; its full sequence is Photosystem II protein D1 (360 aa).

3 helical membrane-spanning segments follow: residues 29 to 46 (YIGWFGVVMIPTLLTATS), 118 to 133 (HFLLGVCCYIGREWEF), and 142 to 156 (WISVAFTAPVVAASA). H118 serves as a coordination point for chlorophyll a. A pheophytin a-binding site is contributed by Y126. The [CaMn4O5] cluster site is built by D170 and E189. Residues 197 to 218 (LHQLGVAGVFGGSLFSAMHGSL) form a helical membrane-spanning segment. H198 contributes to the chlorophyll a binding site. A quinone contacts are provided by residues H215 and 264 to 265 (SF). H215 lines the Fe cation pocket. H272 lines the Fe cation pocket. The helical transmembrane segment at 274-288 (FLGLWPVVGIWFTSM) threads the bilayer. The [CaMn4O5] cluster site is built by H332, E333, D342, and A344. Residues 345–360 (SNESLPLALVAPAING) constitute a propeptide that is removed on maturation.

It belongs to the reaction center PufL/M/PsbA/D family. As to quaternary structure, PSII is composed of 1 copy each of membrane proteins PsbA, PsbB, PsbC, PsbD, PsbE, PsbF, PsbH, PsbI, PsbJ, PsbK, PsbL, PsbM, PsbT, PsbX, PsbY, PsbZ, Psb30/Ycf12, at least 3 peripheral proteins of the oxygen-evolving complex and a large number of cofactors. It forms dimeric complexes. The cofactor is The D1/D2 heterodimer binds P680, chlorophylls that are the primary electron donor of PSII, and subsequent electron acceptors. It shares a non-heme iron and each subunit binds pheophytin, quinone, additional chlorophylls, carotenoids and lipids. D1 provides most of the ligands for the Mn4-Ca-O5 cluster of the oxygen-evolving complex (OEC). There is also a Cl(-1) ion associated with D1 and D2, which is required for oxygen evolution. The PSII complex binds additional chlorophylls, carotenoids and specific lipids.. Tyr-161 forms a radical intermediate that is referred to as redox-active TyrZ, YZ or Y-Z. Post-translationally, C-terminally processed by CTPA; processing is essential to allow assembly of the oxygen-evolving complex and thus photosynthetic growth.

The protein resides in the plastid. It is found in the chloroplast thylakoid membrane. The catalysed reaction is 2 a plastoquinone + 4 hnu + 2 H2O = 2 a plastoquinol + O2. Photosystem II (PSII) is a light-driven water:plastoquinone oxidoreductase that uses light energy to abstract electrons from H(2)O, generating O(2) and a proton gradient subsequently used for ATP formation. It consists of a core antenna complex that captures photons, and an electron transfer chain that converts photonic excitation into a charge separation. The D1/D2 (PsbA/PsbD) reaction center heterodimer binds P680, the primary electron donor of PSII as well as several subsequent electron acceptors. The polypeptide is Photosystem II protein D1 (Antithamnion sp. (Red alga)).